A 149-amino-acid chain; its full sequence is Calmodulin (149 aa).

A2 carries the N-acetylalanine modification. 4 EF-hand domains span residues 8-43, 44-79, 81-116, and 117-149; these read EQIAEFKEAFSLFDKDGDGTITTKELGTVMRSLGQN, PTEAELQDMINEVDSDGNGTIDFPEFLSLMARKMKD, DTEEELIEAFKVFDRDGNGFISAAELRHVMTNLGEK, and LTDEEVDEMIREADVDGDGQINYEEFVKMMMAK. Residues D21, D23, D25, T27, E32, D57, D59, N61, T63, E68, D94, D96, N98, and E105 each coordinate Ca(2+). Position 116 is an N6,N6,N6-trimethyllysine (K116). D130, D132, D134, Q136, and E141 together coordinate Ca(2+).

It belongs to the calmodulin family.

In terms of biological role, calmodulin mediates the control of a large number of enzymes, ion channels and other proteins by Ca(2+). Among the enzymes to be stimulated by the calmodulin-Ca(2+) complex are a number of protein kinases and phosphatases. The chain is Calmodulin from Heterocapsa triquetra (Dinoflagellate).